We begin with the raw amino-acid sequence, 254 residues long: Small ribosomal subunit protein uS2 (254 aa).

It belongs to the universal ribosomal protein uS2 family.

In Oceanobacillus iheyensis (strain DSM 14371 / CIP 107618 / JCM 11309 / KCTC 3954 / HTE831), this protein is Small ribosomal subunit protein uS2.